The sequence spans 328 residues: Putative tyrosine-protein kinase C03B1.5 (328 aa).

Positions Trp-25–Leu-288 constitute a Protein kinase domain. Residues Ile-31–Val-39 and Lys-62 each bind ATP. Residue Asp-155 is the Proton acceptor of the active site.

This sequence belongs to the protein kinase superfamily. Tyr protein kinase family.

The catalysed reaction is L-tyrosyl-[protein] + ATP = O-phospho-L-tyrosyl-[protein] + ADP + H(+). This is Putative tyrosine-protein kinase C03B1.5 from Caenorhabditis elegans.